Here is a 253-residue protein sequence, read N- to C-terminus: Ubiquinone biosynthesis O-methyltransferase (253 aa).

Residues R47, G78, D99, and M141 each contribute to the S-adenosyl-L-methionine site.

It belongs to the methyltransferase superfamily. UbiG/COQ3 family.

The catalysed reaction is a 3-demethylubiquinol + S-adenosyl-L-methionine = a ubiquinol + S-adenosyl-L-homocysteine + H(+). It carries out the reaction a 3-(all-trans-polyprenyl)benzene-1,2-diol + S-adenosyl-L-methionine = a 2-methoxy-6-(all-trans-polyprenyl)phenol + S-adenosyl-L-homocysteine + H(+). It participates in cofactor biosynthesis; ubiquinone biosynthesis. Its function is as follows. O-methyltransferase that catalyzes the 2 O-methylation steps in the ubiquinone biosynthetic pathway. The protein is Ubiquinone biosynthesis O-methyltransferase of Rhodopseudomonas palustris (strain HaA2).